The following is an 889-amino-acid chain: Protein argonaute 15 (889 aa).

Disordered stretches follow at residues 1 to 26 and 119 to 150; these read MESHGDEGEPSAMAKPPKKLPMSRKG and EDASSSGRTTTRRSSGGDDGSPGGSDRKRMKR. Positions 122 to 132 are enriched in low complexity; sequence SSSGRTTTRRS. A PAZ domain is found at 264–379; it reads PVIEFLLFNQ…IPLELCHLVP (116 aa). The Piwi domain maps to 546 to 853; it reads FVLCVLPERK…AAAQVSQFVR (308 aa). The segment at 857 to 878 is disordered; sequence AASEGSGDGGAPPRPVPELPRL.

Belongs to the argonaute family. Ago subfamily.

Its function is as follows. Probably involved in the RNA silencing pathway. May bind to short RNAs such as microRNAs (miRNAs) or short interfering RNAs (siRNAs), and represses the translation of mRNAs which are complementary to them. This chain is Protein argonaute 15 (AGO15), found in Oryza sativa subsp. japonica (Rice).